Consider the following 455-residue polypeptide: Chromosomal replication initiator protein DnaA (455 aa).

A domain I, interacts with DnaA modulators region spans residues 1–75 (MDTNNNIEKE…EILSQNKVGM (75 aa)). Residues 75–106 (MHLAHSVDVRIEVAPKIQISAQPNINYKAVKT) form a domain II region. Residues 107 to 321 (SVKDSYTFEN…GAIIKISVNA (215 aa)) are domain III, AAA+ region. Residues Gly-151, Gly-153, Lys-154, and Thr-155 each contribute to the ATP site. Residues 322–455 (NLMNAPIDLN…DKKTAFHSSE (134 aa)) are domain IV, binds dsDNA.

This sequence belongs to the DnaA family. Oligomerizes as a right-handed, spiral filament on DNA at oriC.

It localises to the cytoplasm. Its function is as follows. Plays an essential role in the initiation and regulation of chromosomal replication. ATP-DnaA binds to the origin of replication (oriC) to initiate formation of the DNA replication initiation complex once per cell cycle. Binds the DnaA box (a 9 base pair repeat at the origin) and separates the double-stranded (ds)DNA. Forms a right-handed helical filament on oriC DNA; dsDNA binds to the exterior of the filament while single-stranded (ss)DNA is stabiized in the filament's interior. The ATP-DnaA-oriC complex binds and stabilizes one strand of the AT-rich DNA unwinding element (DUE), permitting loading of DNA polymerase. After initiation quickly degrades to an ADP-DnaA complex that is not apt for DNA replication. Binds acidic phospholipids. The sequence is that of Chromosomal replication initiator protein DnaA from Helicobacter pylori (strain Shi470).